The sequence spans 272 residues: 3-keto-5-aminohexanoate cleavage enzyme (272 aa).

Glu-15 is a binding site for (5S)-5-amino-3-oxohexanoate. His-47 and His-49 together coordinate Zn(2+). Positions 83, 86, and 107 each coordinate (5S)-5-amino-3-oxohexanoate. Position 226 (Glu-226) interacts with Zn(2+).

Belongs to the BKACE family. Kce subfamily. Homotetramer. Zn(2+) is required as a cofactor.

It carries out the reaction (5S)-5-amino-3-oxohexanoate + acetyl-CoA = (3S)-3-aminobutanoyl-CoA + acetoacetate. It participates in amino-acid degradation; L-lysine degradation via acetate pathway. Its activity is regulated as follows. 3-fold increase in activity by addition of 10 mM 2-mercaptoethanol. Addition of CoCl(2) and to a lesser extent MnCl(2) increases the activity but not MgCl(2). Inhibited by phosphate buffer but not by 5,5'-dithio-2-nitrobenzoic acid. Involved in the anaerobic fermentation of lysine. Catalyzes the reversible reaction between 3-keto-5-aminohexanoate (KAH) and acetyl-CoA to form 3-aminobutyryl-CoA and acetoacetate. The reaction involves the deprotonation of KAH, the nucleophilic addition onto acetyl-CoA and the intramolecular transfer of the CoA moiety. It can also use beta-alanyl-CoA as substrate. The sequence is that of 3-keto-5-aminohexanoate cleavage enzyme from Fusobacterium nucleatum subsp. nucleatum (strain ATCC 25586 / DSM 15643 / BCRC 10681 / CIP 101130 / JCM 8532 / KCTC 2640 / LMG 13131 / VPI 4355).